We begin with the raw amino-acid sequence, 518 residues long: NADH-quinone oxidoreductase subunit N (518 aa).

The next 14 helical transmembrane spans lie at 18–38 (FRPE…DLVF), 45–65 (VALL…LLAI), 82–102 (AFAI…VIIA), 113–133 (IGQF…MASA), 136–156 (LLMV…LAGF), 171–191 (VIYG…LYGL), 220–240 (VALV…VAAV), 254–274 (PTPF…ALAI), 295–315 (LAGI…MTLG), 328–348 (LLAY…SAVS), 355–375 (VMIY…VVIL), 399–419 (AVAF…AGFV), 439–459 (WYAW…YYYV), and 486–506 (VMLG…TPMV).

This sequence belongs to the complex I subunit 2 family. NDH-1 is composed of 14 different subunits. Subunits NuoA, H, J, K, L, M, N constitute the membrane sector of the complex.

It is found in the cell inner membrane. The catalysed reaction is a quinone + NADH + 5 H(+)(in) = a quinol + NAD(+) + 4 H(+)(out). In terms of biological role, NDH-1 shuttles electrons from NADH, via FMN and iron-sulfur (Fe-S) centers, to quinones in the respiratory chain. The immediate electron acceptor for the enzyme in this species is believed to be ubiquinone. Couples the redox reaction to proton translocation (for every two electrons transferred, four hydrogen ions are translocated across the cytoplasmic membrane), and thus conserves the redox energy in a proton gradient. The protein is NADH-quinone oxidoreductase subunit N of Anaeromyxobacter sp. (strain Fw109-5).